The primary structure comprises 213 residues: Thymidylate kinase (213 aa).

G10–T17 serves as a coordination point for ATP.

This sequence belongs to the thymidylate kinase family.

It carries out the reaction dTMP + ATP = dTDP + ADP. Functionally, phosphorylation of dTMP to form dTDP in both de novo and salvage pathways of dTTP synthesis. The polypeptide is Thymidylate kinase (Klebsiella pneumoniae subsp. pneumoniae (strain ATCC 700721 / MGH 78578)).